A 428-amino-acid chain; its full sequence is MLESLTLQPIALVNGTVNLPGSKSVSNRALLLAALAEGTTQLNNVLDSDDIRHMLNALQALGVDFRLSADRTCCEVDGLGGKLVAEQPLSLFLGNAGTAMRPLAAVLCLGNSDIVLTGEPRMKERPIGHLVDALRQGGAQIDYLEQENYPPLRLRGGFRGGELTVDGRVSSQFLTALLMTAPLAEQDTTIRIMGDLVSKPYIDITLHLMKAFGIDVGHENYQIFHIKGGQTYRSPGTYLVEGDASSASYFLAAAAIKGGTVRVTGIGKKSVQGDTKFADVLEKMGAKVTWGDDYIECSRGELQGIDMDMNHIPDAAMTIATTALFATGPTTIRNIYNWRVKETDRLTAMATELRKVGAEVEEGEDYIRVVPPLQLTAADIGTYDDHRMAMCFSLVALSDTPVTILDPKCTAKTFPDYFEQFARLSQLA.

Positions 23, 24, and 28 each coordinate 3-phosphoshikimate. Residue K23 coordinates phosphoenolpyruvate. Phosphoenolpyruvate-binding residues include G97 and R125. Residues S170, S171, Q172, S198, D314, N337, and K341 each contribute to the 3-phosphoshikimate site. A phosphoenolpyruvate-binding site is contributed by Q172. D314 functions as the Proton acceptor in the catalytic mechanism. Phosphoenolpyruvate is bound by residues R345, R387, and K412.

It belongs to the EPSP synthase family. Monomer.

Its subcellular location is the cytoplasm. The enzyme catalyses 3-phosphoshikimate + phosphoenolpyruvate = 5-O-(1-carboxyvinyl)-3-phosphoshikimate + phosphate. It participates in metabolic intermediate biosynthesis; chorismate biosynthesis; chorismate from D-erythrose 4-phosphate and phosphoenolpyruvate: step 6/7. In terms of biological role, catalyzes the transfer of the enolpyruvyl moiety of phosphoenolpyruvate (PEP) to the 5-hydroxyl of shikimate-3-phosphate (S3P) to produce enolpyruvyl shikimate-3-phosphate and inorganic phosphate. The protein is 3-phosphoshikimate 1-carboxyvinyltransferase of Yersinia pestis bv. Antiqua (strain Antiqua).